Consider the following 155-residue polypeptide: Small ribosomal subunit protein uS7 (155 aa).

This sequence belongs to the universal ribosomal protein uS7 family. In terms of assembly, part of the 30S ribosomal subunit. Contacts proteins S9 and S11.

One of the primary rRNA binding proteins, it binds directly to 16S rRNA where it nucleates assembly of the head domain of the 30S subunit. Is located at the subunit interface close to the decoding center, probably blocks exit of the E-site tRNA. The polypeptide is Small ribosomal subunit protein uS7 (Corynebacterium glutamicum (strain R)).